Consider the following 319-residue polypeptide: Plastid lipid-associated protein 2, chloroplastic (319 aa).

The N-terminal 59 residues, 1–59, are a transit peptide targeting the chloroplast; that stretch reads MATVQFFNQFPCKTRVQSSANSKPLSKPPSSLVPMSALTRRPSFPPGEFAVSRSDFRVR. The tract at residues 17-39 is disordered; it reads QSSANSKPLSKPPSSLVPMSALT. A compositionally biased stretch (low complexity) spans 18 to 36; that stretch reads SSANSKPLSKPPSSLVPMS.

The protein belongs to the PAP/fibrillin family. As to expression, expressed almost exclusively in petals. Very weak expression in all other organs.

It is found in the plastid. It localises to the chloroplast. Functionally, may stabilize the accumulated carotenoid structures. This is Plastid lipid-associated protein 2, chloroplastic (PAP2) from Brassica campestris (Field mustard).